A 209-amino-acid chain; its full sequence is Protein GET1 (209 aa).

Topologically, residues 1-3 (MSL) are lumenal. The helical transmembrane segment at 4–23 (LLVIFLLELVVQLVNTIGAK) threads the bilayer. Residues 24–110 (TINNLLWRFY…SFSRKLTIYR (87 aa)) are Cytoplasmic-facing. The stretch at 74 to 101 (WARLQRKHDKLMDELEKKKSQLDAHRTS) forms a coiled coil. The chain crosses the membrane as a helical span at residues 111–131 (WILTRGMQWFLCFWFSSQPMF). The Lumenal segment spans residues 132–155 (WLPYGWFPYWVEWLVSFPNAPMGS). Residues 156-172 (VSIVVWQSACSGVLALV) form a helical membrane-spanning segment. Over 173-209 (IEAVMAVVRYTGGTGMQKQRQPVPAAGGAPGTSKKDL) the chain is Cytoplasmic. The segment at 188-209 (MQKQRQPVPAAGGAPGTSKKDL) is disordered.

This sequence belongs to the WRB/GET1 family. Interacts with GET3.

Its subcellular location is the endoplasmic reticulum membrane. In terms of biological role, required for the post-translational delivery of tail-anchored (TA) proteins to the endoplasmic reticulum. Acts as a membrane receptor for soluble GET3, which recognizes and selectively binds the transmembrane domain of TA proteins in the cytosol. This Chaetomium thermophilum (strain DSM 1495 / CBS 144.50 / IMI 039719) (Thermochaetoides thermophila) protein is Protein GET1.